The chain runs to 493 residues: MAPALNANPTTKRDELSAPSASHKLGMSSMASRAAGGGLKLTGLPDLSDSAGTLSDIFGTPQMREIWSDQNRVACYLEIEAALAIVQADLGIIPKNAAHEIVEHCRVQEIDWALYKQKTELIGYPVLGIVQQLVANCKDGLGEYCHWGATTQDITDTATVMQIRQSLTLVKQRLDSIVSSLEHLAEQHRNVPMAARSNLKQAVPITFGFKMARFLATFRRHQQRLVELEKRVYTLEFGGAAGNLSSLGDQGIATHDALAKMLDLAPAEIAWHTEHDRFAEVGTFLGLLTGTLAKLATDIKLMSQTEVGEVGEPFISNRGSSSTMPQKNNPISCVYIHACAANVRQGAAALLDAMQSDHERGTGPWEIIWVQLPLMMNWTSAALNNADFVLRGLQVFPDAMQHNLDLSKGLIVSEAVMMGLGNTLGRQYAHDAVYECCRTAFVQDRPLLDVLLENHEIASKLDRTELEKLCDPANYLGQCSQWIDRVLSRPSSA.

The disordered stretch occupies residues 1-22 (MAPALNANPTTKRDELSAPSAS).

This sequence belongs to the class-II fumarase/aspartase family.

The protein resides in the cytoplasm. The protein localises to the cytosol. It localises to the nucleus. It carries out the reaction trans-aconitate + H(+) = itaconate + CO2. It participates in secondary metabolite biosynthesis. Functionally, trans-aconitate decarboxylase; part of the gene cluster that mediates the biosynthesis of itaconic acid and 2-hydroxyparaconate. Cis-aconitate is secreted by the mitochondrial tricarboxylate transporter MTT1. In the cytosol cis-aconitate is converted into trans-aconitate via isomerization by the aconitate-delta-isomerase ADI1. Decarboxylation of trans-aconitate by the trans-aconitate decarboxylase TAD1 then leads then to the production of itaconic acid. The cytochrome P450 monooxygenase CYP3 further converts itaconate to 2-hydroxyparaconate via oxidation of the double bond, leading to a transient epoxide, which can subsequently be lactonized to produce 2-hydroxyparaconate. Secretion of itaconate and possibly 2-hydroxyparaconate into the medium is mediated by the major facilitator ITP1. The glyoxalase domain-containing protein RDO1 is not involved in the biosynthesis of itaconate and 2-hydroxyparaconate, however, it might play a role in the further conversion of 2-hydroxyparaconate to itatartarate. In Mycosarcoma maydis (Corn smut fungus), this protein is Trans-aconitate decarboxylase 1.